The chain runs to 153 residues: Aspartate carbamoyltransferase regulatory chain (153 aa).

Residues Cys109, Cys114, Cys138, and Cys141 each contribute to the Zn(2+) site.

The protein belongs to the PyrI family. Contains catalytic and regulatory chains. It depends on Zn(2+) as a cofactor.

Its function is as follows. Involved in allosteric regulation of aspartate carbamoyltransferase. This chain is Aspartate carbamoyltransferase regulatory chain, found in Shigella dysenteriae serotype 1 (strain Sd197).